The primary structure comprises 1091 residues: ATP-citrate synthase (1091 aa).

Residues 4–265 (KAISEQTGKE…LDAKSGASLK (262 aa)) form the ATP-grasp domain. The ATP site is built by K58, R66, G67, P109, V111, and E118. Y131 carries the phosphotyrosine modification. D216 is a binding site for ATP. D257, S260, and A262 together coordinate Mg(2+). S263 is subject to Phosphoserine. 5 residues coordinate citrate: G309, N346, T348, Y364, and R379. A compositionally biased stretch (low complexity) spans 442 to 457 (SGSTSTPAPSRTASFS). The tract at residues 442 to 471 (SGSTSTPAPSRTASFSESRTDEVAPAKKAK) is disordered. T447 is subject to Phosphothreonine. Position 451 is a phosphoserine (S451). Position 455 is a phosphoserine; by PKA and PKB/AKT1 or PKB/AKT2 or BCKDK (S455). A Phosphoserine modification is found at S459. N6-acetyllysine; alternate occurs at positions 530, 536, and 544. Glycyl lysine isopeptide (Lys-Gly) (interchain with G-Cter in ubiquitin); alternate cross-links involve residues K530, K536, and K544. A Phosphothreonine modification is found at T629. S653 is subject to Phosphoserine. Y672 is modified (phosphotyrosine). The Tele-phosphohistidine intermediate role is filled by H750. 769–779 (LKEAGVFVPRS) is a CoA binding site. S829 carries the phosphoserine modification. 4 positions are modified to N6-acetyllysine: K938, K958, K968, and K1067. S1090 is subject to Phosphoserine.

It in the N-terminal section; belongs to the succinate/malate CoA ligase beta subunit family. In the C-terminal section; belongs to the succinate/malate CoA ligase alpha subunit family. Homotetramer. Mg(2+) serves as cofactor. Post-translationally, phosphorylated by PKA and GSK3 in a sequential manner; phosphorylation results in activation of its activity. Phosphorylation on Thr-447 and Ser-451 depends on the phosphorylation state of Ser-455. Phosphorylation on Ser-455 is decreased by prior phosphorylation on the other 2 residues. Phosphorylated at Ser-455 by BCKDK and dephosphorylated by protein phosphatase PPM1K. In terms of processing, ISGylated. Acetylated at Lys-530, Lys-536 and Lys-544 by KAT2B/PCAF. Acetylation is promoted by glucose and stabilizes the protein, probably by preventing ubiquitination at the same sites. Acetylation promotes de novo lipid synthesis. Deacetylated by SIRT2. Post-translationally, ubiquitinated at Lys-530, Lys-536 and Lys-544 by the BCR(KLHL25) E3 ubiquitin ligase complex and UBR4, leading to its degradation. Ubiquitination is probably inhibited by acetylation at same site. BCR(KLHL25)-mediated degradation of ACLY promotes fatty acid oxidation and is required for differentiation of inducible regulatory T (iTreg) cells.

The protein localises to the cytoplasm. Its subcellular location is the cytosol. It carries out the reaction oxaloacetate + acetyl-CoA + ADP + phosphate = citrate + ATP + CoA. Phosphorylation results in activation of its activity. Glucose 6-phosphate, fructose 6-phosphate, fructose 2,6-bisphosphate, ribulose 5-phosphate, and fructose 1,6-bisphosphate also act as activators. Functionally, catalyzes the cleavage of citrate into oxaloacetate and acetyl-CoA, the latter serving as common substrate in multiple biochemical reactions in protein, carbohydrate and lipid metabolism. In Bos taurus (Bovine), this protein is ATP-citrate synthase (ACLY).